A 219-amino-acid polypeptide reads, in one-letter code: GTP cyclohydrolase 1 (219 aa).

Residues 1-37 (MDAVLKSLSVRLPDAADKRSDTGRPERVTERPTRQEA) form a disordered region. The segment covering 14-37 (DAADKRSDTGRPERVTERPTRQEA) has biased composition (basic and acidic residues). Zn(2+) is bound by residues Cys108, His111, and Cys179.

This sequence belongs to the GTP cyclohydrolase I family. As to quaternary structure, homomer.

It catalyses the reaction GTP + H2O = 7,8-dihydroneopterin 3'-triphosphate + formate + H(+). Its pathway is cofactor biosynthesis; 7,8-dihydroneopterin triphosphate biosynthesis; 7,8-dihydroneopterin triphosphate from GTP: step 1/1. This is GTP cyclohydrolase 1 from Methylobacterium sp. (strain 4-46).